The sequence spans 261 residues: Ribosome-inactivating protein PD-L3/PD-L4 (261 aa).

Residue N10 is glycosylated (N-linked (GlcNAc...) asparagine; in PD-L3). 2 disulfides stabilise this stretch: C34–C258 and C84–C105. The active site involves E175.

Belongs to the ribosome-inactivating protein family. Type 1 RIP subfamily.

It catalyses the reaction Endohydrolysis of the N-glycosidic bond at one specific adenosine on the 28S rRNA.. Its function is as follows. Inhibits protein synthesis. Does not cleave supercoiled pBR322 dsDNA. This Phytolacca dioica (Bella sombra tree) protein is Ribosome-inactivating protein PD-L3/PD-L4.